The sequence spans 867 residues: FO synthase (867 aa).

A disordered region spans residues 1 to 22; that stretch reads MTTSATSGTGPADPAGPTENSM. 2 Radical SAM core domains span residues 75–325 and 534–769; these read ITYS…LQAP and VTYI…LLHP. Residues 76–407 form a cofG-like region; the sequence is TYSKSVFVPL…PRLRPHVAAL (332 aa). Positions 89, 93, 96, 548, 552, and 555 each coordinate [4Fe-4S] cluster. Positions 511–844 are cofH-like; that stretch reads EGPALDALCG…KPRTTLYGPV (334 aa). The interval 835–867 is disordered; that stretch reads KPRTTLYGPVPEERQRAARDSDGHLPELLPVLD. Basic and acidic residues predominate over residues 845–859; it reads PEERQRAARDSDGHL.

It in the N-terminal section; belongs to the radical SAM superfamily. CofG family. The protein in the C-terminal section; belongs to the radical SAM superfamily. CofH family. The cofactor is [4Fe-4S] cluster.

The enzyme catalyses 5-amino-6-(D-ribitylamino)uracil + L-tyrosine + S-adenosyl-L-methionine = 5-amino-5-(4-hydroxybenzyl)-6-(D-ribitylimino)-5,6-dihydrouracil + 2-iminoacetate + 5'-deoxyadenosine + L-methionine + H(+). It catalyses the reaction 5-amino-5-(4-hydroxybenzyl)-6-(D-ribitylimino)-5,6-dihydrouracil + S-adenosyl-L-methionine = 7,8-didemethyl-8-hydroxy-5-deazariboflavin + 5'-deoxyadenosine + L-methionine + NH4(+) + H(+). It functions in the pathway cofactor biosynthesis; coenzyme F0 biosynthesis. Catalyzes the radical-mediated synthesis of 7,8-didemethyl-8-hydroxy-5-deazariboflavin (FO) from 5-amino-6-(D-ribitylamino)uracil and L-tyrosine. The protein is FO synthase (fbiC) of Streptomyces coelicolor (strain ATCC BAA-471 / A3(2) / M145).